Here is a 689-residue protein sequence, read N- to C-terminus: MEVVSSLGIRDLPASLSVTTSLNHRPHRSDKDGAPAKSPIRPSRTRRPSTSPAKKPKPFRERDAFPSSLPLHSKNPYIIHRDIQIFARQNNLEVALTILDYLEQRGIPVNATTFSALLEACVRRKSLLHGKQVHVHIRINGLESNEFLRTKLVHMYTACGSVKDAQKVFDESTSSNVYSWNALLRGTVISGKKRYQDVLSTFTEMRELGVDLNVYSLSNVFKSFAGASALRQGLKTHALAIKNGLFNSVFLKTSLVDMYFKCGKVGLARRVFDEIVERDIVVWGAMIAGLAHNKRQWEALGLFRTMISEEKIYPNSVILTTILPVLGDVKALKLGKEVHAHVLKSKNYVEQPFVHSGLIDLYCKCGDMASGRRVFYGSKQRNAISWTALMSGYAANGRFDQALRSIVWMQQEGFRPDVVTIATVLPVCAELRAIKQGKEIHCYALKNLFLPNVSLVTSLMVMYSKCGVPEYPIRLFDRLEQRNVKAWTAMIDCYVENCDLRAGIEVFRLMLLSKHRPDSVTMGRVLTVCSDLKALKLGKELHGHILKKEFESIPFVSARIIKMYGKCGDLRSANFSFDAVAVKGSLTWTAIIEAYGCNELFRDAINCFEQMVSRGFTPNTFTFTAVLSICSQAGFVDEAYRFFNLMLRMYNLQPSEEHYSLVIELLNRCGRVEEAQRLAVMSSSSSLQT.

The N-terminal 49 residues, Met1 to Ser49, are a transit peptide targeting the chloroplast. The tract at residues Leu16 to Ser68 is disordered. Residues Ser38–Pro52 show a composition bias toward low complexity. 18 PPR repeats span residues Asn75–Val109, Asn110–Ser144, Asn145–Ser175, Asn176–Leu212, Asn213–Asn247, Ser248–Val282, Trp283–Glu309, Asn315–Glu350, Gln351–Arg381, Asn382–Pro416, Asp417–Pro451, Asn452–Arg482, Asn483–Pro517, Asp518–Ser552, Ile553–Lys583, Gly584–Pro618, Asn619–Met649, and Ser655–Thr689.

This sequence belongs to the PPR family. PCMP-A subfamily.

Its subcellular location is the plastid. It localises to the chloroplast. The protein is Pentatricopeptide repeat-containing protein At1g71460, chloroplastic (PCMP-A3) of Arabidopsis thaliana (Mouse-ear cress).